We begin with the raw amino-acid sequence, 742 residues long: MSLLLEPNAAMIKEQKLYREMGLTDEEFARIEAILGRLPNYTETGIFSVMWSEHCSYKNSKPVLKKFPTDGPHVLQGPGEGAGIVDIGDGLAVAFKIESHNHPSAIEPYQGAATGVGGIIRDVFSMGARPIALLNSLRFGELTSPRVKYLFEHVVAGIAGYGNCIGIPTVGGEVQFDPAYEGNPLVNAMCVGIIRHEDIQRGVATGVGNTVMYVGAKTGRDGIHGATFASEELSEQSEAKRPAVQVGDPFMEKLLLEACLEAVKSDALVGIQDMGAAGLTSSSAEMASKGGFGIEMNLDLVPQRETGMTPYEMMLSESQERMLLVVEQGREEEIAAIFAKYGLEAKAIGKVTDDKMLRLFFHGEVVAEIPVDALAKDAPVYHKPSAEPDYYREFQAMPTYIPQIEDYNRTLLGLLAQPTIASKEWVYDQYDYMVRTNTVVAPGSDAAVVRIRGTNKALALTTDCNSRYLYLDPEMGGKIAVAEAARNVVCSGAKPLAITDCLNFGNPEKPDIFWQLEKAVDGMSEACRTLGTPVVSGNVSLYNETNGEAVYPTPVVGMVGLVDDLSHVTTQPFKQAGDLIYVIGEAKPEFGGSELQKWLEGRIFGKAPELDLAVEASRQRQLLTAIRAGVVASAHDVAEGGLAVALAECVIGASGLGANVTVSGDLVSELFSETQSRFVVSVKKEHQEAFEQLVEAKLIGEVTNDSILTVNGEHGGTVIRLSVDEMRNVWKGAIPCLLKSKD.

Histidine 54 is a catalytic residue. Residues tyrosine 57 and lysine 96 each coordinate ATP. Glutamate 98 lines the Mg(2+) pocket. Residues 99–102 (SHNH) and arginine 121 contribute to the substrate site. The active-site Proton acceptor is histidine 100. Aspartate 122 contributes to the Mg(2+) binding site. Glutamine 245 lines the substrate pocket. Aspartate 273 serves as a coordination point for Mg(2+). Substrate is bound at residue 317–319 (ESQ). Aspartate 500 and glycine 537 together coordinate ATP. A Mg(2+)-binding site is contributed by asparagine 538. Serine 540 is a substrate binding site.

Belongs to the FGAMS family. In terms of assembly, monomer. Part of the FGAM synthase complex composed of 1 PurL, 1 PurQ and 2 PurS subunits.

The protein localises to the cytoplasm. The enzyme catalyses N(2)-formyl-N(1)-(5-phospho-beta-D-ribosyl)glycinamide + L-glutamine + ATP + H2O = 2-formamido-N(1)-(5-O-phospho-beta-D-ribosyl)acetamidine + L-glutamate + ADP + phosphate + H(+). It functions in the pathway purine metabolism; IMP biosynthesis via de novo pathway; 5-amino-1-(5-phospho-D-ribosyl)imidazole from N(2)-formyl-N(1)-(5-phospho-D-ribosyl)glycinamide: step 1/2. Its function is as follows. Part of the phosphoribosylformylglycinamidine synthase complex involved in the purines biosynthetic pathway. Catalyzes the ATP-dependent conversion of formylglycinamide ribonucleotide (FGAR) and glutamine to yield formylglycinamidine ribonucleotide (FGAM) and glutamate. The FGAM synthase complex is composed of three subunits. PurQ produces an ammonia molecule by converting glutamine to glutamate. PurL transfers the ammonia molecule to FGAR to form FGAM in an ATP-dependent manner. PurS interacts with PurQ and PurL and is thought to assist in the transfer of the ammonia molecule from PurQ to PurL. This is Phosphoribosylformylglycinamidine synthase subunit PurL from Geobacillus thermodenitrificans (strain NG80-2).